Here is a 135-residue protein sequence, read N- to C-terminus: Large ribosomal subunit protein mL41B (135 aa).

The transit peptide at 1–13 directs the protein to the mitochondrion; that stretch reads MGLITKIARGLVR.

This sequence belongs to the mitochondrion-specific ribosomal protein mL41 family. As to quaternary structure, component of the mitochondrial ribosome large subunit (39S) which comprises a 16S rRNA and about 50 distinct proteins.

The protein localises to the mitochondrion. Its function is as follows. Component of the mitochondrial ribosome large subunit. Also involved in apoptosis and cell cycle. In Xenopus laevis (African clawed frog), this protein is Large ribosomal subunit protein mL41B (mrpl41-b).